A 486-amino-acid polypeptide reads, in one-letter code: MTTPHLDSAQDIDLSRVHLIGIGGAGMSGVARILLARGKTVTGSDAKDSRTLLPLRAVGATIAVGHAAENLELSGELPTVVVTSFAAIPQDNPELVRAREEGIPVIRRSDLLGELLEGSTQVLIAGTHGKTSTTSMSVVAMQAAGMDPSFAIGGQLNKAGTNAHHGTGEVFIAEADESDASLLRYKPNVAVVTNVEPDHLDFFKTPEAYFQVFDDFAGRITPNGKLVVCLNDPHAAELGERSVRKGIKTVGYGTADAVQAHPEVPAMATIVDSQVVAEGTRATINIDGQEVSVILQIPGDHMVLNGAAALLAGYLVGGDVDKLVEGLSDFSGVRRRFEFHGAIEGGKFNGAAIYDDYAHHPTEVTAVLSAARTRVKAAGKGRVIVAFQPHLYSRTIEFQKEFAEALSLADAAVVLEIYGAREQPVDGVSSEIITDAMTIPVVYEPNFSAVPERIAEIAGPNDIVLTMGAGSVTMLAPEILDQLQNN.

Gly126–Ser132 contacts ATP.

The protein belongs to the MurCDEF family.

The protein localises to the cytoplasm. It catalyses the reaction UDP-N-acetyl-alpha-D-muramate + L-alanine + ATP = UDP-N-acetyl-alpha-D-muramoyl-L-alanine + ADP + phosphate + H(+). It functions in the pathway cell wall biogenesis; peptidoglycan biosynthesis. Cell wall formation. This chain is UDP-N-acetylmuramate--L-alanine ligase, found in Corynebacterium glutamicum (strain ATCC 13032 / DSM 20300 / JCM 1318 / BCRC 11384 / CCUG 27702 / LMG 3730 / NBRC 12168 / NCIMB 10025 / NRRL B-2784 / 534).